The primary structure comprises 472 residues: 4-aminobutyrate aminotransferase (472 aa).

Position 135–136 (135–136) interacts with pyridoxal 5'-phosphate; the sequence is GA. Arg-193 provides a ligand contact to substrate. Lys-327 carries the N6-(pyridoxal phosphate)lysine modification. Thr-352 contributes to the pyridoxal 5'-phosphate binding site.

It belongs to the class-III pyridoxal-phosphate-dependent aminotransferase family. In terms of assembly, homodimer and homotetramer. The cofactor is pyridoxal 5'-phosphate.

It localises to the cytoplasm. It carries out the reaction 4-aminobutanoate + 2-oxoglutarate = succinate semialdehyde + L-glutamate. It participates in amino-acid degradation; L-arginine degradation. Required for the degradation of gamma-aminobutyric acid (GABA), which is important for utilization of GABA as nitrogen source and for oxidative stress tolerance. Deaminates GABA to succinate semialdehyde, which in turn is converted to succinate by the succinate-semialdehyde dehydrogenase UGA2. May be involved in an alternative, arginase-independent arginine degradation pathway via GABA. This Kluyveromyces lactis (strain ATCC 8585 / CBS 2359 / DSM 70799 / NBRC 1267 / NRRL Y-1140 / WM37) (Yeast) protein is 4-aminobutyrate aminotransferase.